The following is a 635-amino-acid chain: Paraneoplastic antigen-like protein 8B (635 aa).

Disordered regions lie at residues 115–202 (PTQA…DESL), 260–332 (TDKS…NPEF), and 492–635 (AARE…PKCR). Over residues 133–147 (SETQAQDSGEVTGQA) the composition is skewed to polar residues. Positions 156–183 (NPRRGRRGRRNRTRRNRLTQKGKKRSRG) are enriched in basic residues. A compositionally biased stretch (basic and acidic residues) spans 261–273 (DKSKKEEAEKEPA). Acidic residues-rich tracts occupy residues 302-329 (PDEE…ELDN) and 502-524 (GSEE…EASE). Residues 531-540 (RKPRAKRART) show a composition bias toward basic residues. The span at 541-557 (APRGLTPAGAPPTASGA) shows a compositional bias: low complexity. Basic residues-rich tracts occupy residues 558-568 (RKTRAGGRGRG) and 619-635 (ARGK…PKCR).

The protein belongs to the PNMA family.

This is Paraneoplastic antigen-like protein 8B from Homo sapiens (Human).